Reading from the N-terminus, the 177-residue chain is Eggshell protein (177 aa).

Positions 1–18 (MKQSLTLVFLVAIGYATA) are cleaved as a signal peptide. Tandem repeats lie at residues 25-41 (YSGG…CDSG), 42-59 (YGDS…CGGG), 60-75 (YGGG…DCGN), 76-91 (YGGG…DCGN), and 92-112 (YGGG…CGGG). A 5 X approximate tandem repeats region spans residues 25–112 (YSGGYGGGCY…GCSGGNCGGG (88 aa)). Residues 149-166 (GSGKGKGGGKGGKGGKGG) show a composition bias toward gly residues. Residues 149–177 (GSGKGKGGGKGGKGGKGGTYKPSHYGGGY) are disordered.

The polypeptide is Eggshell protein (F10) (Schistosoma mansoni (Blood fluke)).